The chain runs to 309 residues: Putative S-adenosyl-L-methionine-dependent methyltransferase Mflv_0743 (309 aa).

Residues Asp134 and 163–164 (DL) each bind S-adenosyl-L-methionine.

The protein belongs to the UPF0677 family.

Exhibits S-adenosyl-L-methionine-dependent methyltransferase activity. This chain is Putative S-adenosyl-L-methionine-dependent methyltransferase Mflv_0743, found in Mycolicibacterium gilvum (strain PYR-GCK) (Mycobacterium gilvum (strain PYR-GCK)).